The chain runs to 362 residues: 3-isopropylmalate dehydrogenase (362 aa).

76 to 87 (GPKWGTGSVRPE) provides a ligand contact to NAD(+). Arginine 94, arginine 104, arginine 133, and aspartate 222 together coordinate substrate. Aspartate 222, aspartate 247, and aspartate 251 together coordinate Mg(2+). NAD(+) is bound at residue 286-297 (GSAPDLGPGKVN).

This sequence belongs to the isocitrate and isopropylmalate dehydrogenases family. As to quaternary structure, homodimer. Mg(2+) serves as cofactor. The cofactor is Mn(2+).

It localises to the cytoplasm. The catalysed reaction is (2R,3S)-3-isopropylmalate + NAD(+) = 4-methyl-2-oxopentanoate + CO2 + NADH. It participates in amino-acid biosynthesis; L-leucine biosynthesis; L-leucine from 3-methyl-2-oxobutanoate: step 3/4. Catalyzes the oxidation of 3-carboxy-2-hydroxy-4-methylpentanoate (3-isopropylmalate) to 3-carboxy-4-methyl-2-oxopentanoate. The product decarboxylates to 4-methyl-2 oxopentanoate. This Pichia angusta (Yeast) protein is 3-isopropylmalate dehydrogenase (LEU2).